Here is a 585-residue protein sequence, read N- to C-terminus: Adenine deaminase (585 aa).

The protein belongs to the metallo-dependent hydrolases superfamily. Adenine deaminase family. The cofactor is Mn(2+).

It carries out the reaction adenine + H2O + H(+) = hypoxanthine + NH4(+). The chain is Adenine deaminase from Halalkalibacterium halodurans (strain ATCC BAA-125 / DSM 18197 / FERM 7344 / JCM 9153 / C-125) (Bacillus halodurans).